The sequence spans 933 residues: Phosphoenolpyruvate carboxylase (933 aa).

Catalysis depends on residues His164 and Lys595.

The protein belongs to the PEPCase type 1 family. Requires Mg(2+) as cofactor.

It carries out the reaction oxaloacetate + phosphate = phosphoenolpyruvate + hydrogencarbonate. Functionally, forms oxaloacetate, a four-carbon dicarboxylic acid source for the tricarboxylic acid cycle. The protein is Phosphoenolpyruvate carboxylase of Rhodopseudomonas palustris (strain HaA2).